Consider the following 205-residue polypeptide: tRNA 2-(methylsulfanyl)-N(6)-isopentenyladenosine(37) hydroxylase (205 aa).

6 residues coordinate Fe cation: Glu38, Glu69, His72, Glu122, Glu151, and His154.

It belongs to the MiaE family. As to quaternary structure, homodimer. Fe cation is required as a cofactor.

It catalyses the reaction 2-methylsulfanyl-N(6)-dimethylallyladenosine(37) in tRNA + AH2 + O2 = N(6)-[(2E)-4-hydroxy-3-methylbut-2-en-1-yl]-2-(methylsulfanyl)adenosine(37) in tRNA + A + H2O. It participates in tRNA modification; 2-methylthio-N-6-(cis-hydroxy)isopentenyl adenosine-tRNA biosynthesis. In terms of biological role, involved in specific tRNA modification. Catalyzes the oxygen-dependent hydroxylation of 2-methylthio-N-6-isopentenyl adenosine (ms2i6A) to produce 2-methylthio-N-6-(cis-hydroxy)isopentenyl adenosine (ms2io6A) at position 37 in tRNAs. The polypeptide is tRNA 2-(methylsulfanyl)-N(6)-isopentenyladenosine(37) hydroxylase (Pseudomonas putida (strain ATCC 47054 / DSM 6125 / CFBP 8728 / NCIMB 11950 / KT2440)).